Reading from the N-terminus, the 382-residue chain is Low-specificity L-threonine aldolase (382 aa).

An N6-(pyridoxal phosphate)lysine modification is found at K214.

The protein belongs to the threonine aldolase family. As to quaternary structure, homotetramer. The cofactor is pyridoxal 5'-phosphate.

The catalysed reaction is L-threonine = acetaldehyde + glycine. It catalyses the reaction L-allo-threonine = acetaldehyde + glycine. It functions in the pathway amino-acid degradation; L-threonine degradation via aldolase pathway; acetaldehyde and glycine from L-threonine: step 1/1. The polypeptide is Low-specificity L-threonine aldolase (GLY1) (Eremothecium gossypii (strain ATCC 10895 / CBS 109.51 / FGSC 9923 / NRRL Y-1056) (Yeast)).